A 1013-amino-acid polypeptide reads, in one-letter code: Tolloid-like protein 1 (1013 aa).

Residues 1–30 (MGLGTLSPRMLVWLVASGIVFYGELWVCAG) form the signal peptide. The propeptide occupies 31-147 (LDYDYTFDGN…GQNEKNRVPR (117 aa)). The Peptidase M12A domain maps to 148-347 (AATSRTERIW…AQARKLYRCP (200 aa)). Residue Asn169 is glycosylated (N-linked (GlcNAc...) asparagine). Intrachain disulfides connect Cys190–Cys346, Cys210–Cys232, Cys212–Cys213, and Cys349–Cys375. His240 serves as a coordination point for Zn(2+). Residue Glu241 is part of the active site. Positions 244 and 250 each coordinate Zn(2+). CUB domains are found at residues 349–461 (CGET…YEAI) and 462–574 (CGGE…FFKE). N-linked (GlcNAc...) asparagine glycans are attached at residues Asn359 and Asn390. 15 cysteine pairs are disulfide-bonded: Cys402–Cys424, Cys462–Cys488, Cys515–Cys537, Cys578–Cys590, Cys586–Cys599, Cys601–Cys614, Cys618–Cys644, Cys671–Cys693, Cys734–Cys745, Cys741–Cys754, Cys756–Cys769, Cys774–Cys800, Cys827–Cys849, Cys887–Cys917, and Cys944–Cys966. An EGF-like 1; calcium-binding domain is found at 574–615 (EEDECAKPDRGGCEQRCLNTLGSYQCACEPGYELGPDRRSCE). One can recognise a CUB 3 domain in the interval 618 to 730 (CGGLLTKLNG…KGFKAHFFSD (113 aa)). N-linked (GlcNAc...) asparagine glycosylation is present at Asn626. Residues 730–770 (DKDECSKDNGGCQHECVNTMGSYMCQCRNGFVLHDNKHDCK) form the EGF-like 2; calcium-binding domain. 2 consecutive CUB domains span residues 774 to 886 (CEQK…HSTE) and 887 to 1003 (CGGR…YKSI).

Requires Zn(2+) as cofactor.

The protein resides in the secreted. In terms of biological role, protease which processes procollagen C-propeptides, such as chordin, pro-biglycan and pro-lysyl oxidase. Required for the embryonic development. Predominant protease, which in the development, influences dorsal-ventral patterning and skeletogenesis. This chain is Tolloid-like protein 1 (TLL1), found in Homo sapiens (Human).